Reading from the N-terminus, the 235-residue chain is Claudin-16 (235 aa).

Residues 1–3 lie on the Cytoplasmic side of the membrane; the sequence is MRD. The chain crosses the membrane as a helical span at residues 4–24; sequence LLQYIACFFAFFSAGFLIVAT. The Extracellular segment spans residues 25–79; it reads WTDCWMVNADDSLEVSTKCRGLWWECVTNAFDGIRTCDEYDSILAEHPLKLVVTR. Residues 80–100 traverse the membrane as a helical segment; that stretch reads ALMITADILAGFGFLTLLLGL. Topologically, residues 101–115 are cytoplasmic; sequence DCVKFLPDEPYIKVR. A helical membrane pass occupies residues 116 to 136; that stretch reads ICFVAGATLLIAGTPGIIGSV. The Extracellular segment spans residues 137–169; sequence WYAVDVYVERSTLVLHNIFLGIQYKFGWSCWLG. A helical membrane pass occupies residues 170-190; sequence MAGSLGCFLAGAVLTCCLYLF. Topologically, residues 191–235 are cytoplasmic; sequence KDVGPERNYPYSLRKAYSAAGVSMAKSYSAPRTETAKMYAVDTRV. The short motif at 233–235 is the Interaction with TJP1 element; it reads TRV.

Belongs to the claudin family. Can form heteropolymeric tight junction strands with other claudins. Interacts with CLDN19. Interacts (via PDZ-binding motif TRV) with TJP1 (via PDZ domain). Cannot form tight junction strands on its own. As to expression, kidney-specific, including the thick ascending limb of Henle (TAL).

The protein resides in the cell junction. It localises to the tight junction. The protein localises to the cell membrane. The catalysed reaction is Mg(2+)(in) = Mg(2+)(out). The enzyme catalyses Ca(2+)(in) = Ca(2+)(out). It catalyses the reaction Na(+)(in) = Na(+)(out). It carries out the reaction K(+)(in) = K(+)(out). The catalysed reaction is Rb(+)(in) = Rb(+)(out). The enzyme catalyses Cs(+)(in) = Cs(+)(out). It catalyses the reaction Li(+)(in) = Li(+)(out). Its function is as follows. Forms paracellular channels: coassembles with CLDN19 into tight junction strands with cation-selective channels through the strands, conveying epithelial permeability in a process known as paracellular tight junction permeability. Involved in the maintenance of ion gradients along the nephron. In the thick ascending limb (TAL) of Henle's loop, facilitates sodium paracellular permeability from the interstitial compartment to the lumen, contributing to the lumen-positive transepithelial potential that drives paracellular magnesium and calcium reabsorption. This chain is Claudin-16, found in Homo sapiens (Human).